The primary structure comprises 383 residues: MLYSPRLTDQILIVAGEASADLHAARTLHELQRLRPGLTAFGVGGPRLREAGLEALAPAEDISVMGLAEVLPRIPRILGILRMLGRAAAERRPKAALLVDLPDFNLRLAARLKKLGIPVVYYVSPTIWAWRQGRAKQIARVVDRMLCILPFEERFYEGTGVSARFVGHPFAERPPPGTPESYRSALGLPAARTTIAMVPGSRPSELKRLLPPMLEAAERLRAAHPDAQFVVPVAPTLDRAALEPYLAAHRTLEVRLVDGRTEEVVGASDAALVKSGTSTLEAGLMLRPMVVVYKLSWLSYAVARMLVKIAHVALVNILAGRGIVPELLQRDASPERMAAEVERLLGDRAAREAQIAALREVRASLGEPGAPLRVAEEVLGVMR.

The protein belongs to the LpxB family.

It catalyses the reaction a lipid X + a UDP-2-N,3-O-bis[(3R)-3-hydroxyacyl]-alpha-D-glucosamine = a lipid A disaccharide + UDP + H(+). It functions in the pathway bacterial outer membrane biogenesis; LPS lipid A biosynthesis. Functionally, condensation of UDP-2,3-diacylglucosamine and 2,3-diacylglucosamine-1-phosphate to form lipid A disaccharide, a precursor of lipid A, a phosphorylated glycolipid that anchors the lipopolysaccharide to the outer membrane of the cell. The sequence is that of Lipid-A-disaccharide synthase from Anaeromyxobacter dehalogenans (strain 2CP-C).